The chain runs to 111 residues: Cytochrome c oxidase subunit 7A2-like, mitochondrial (111 aa).

Residues 1-54 constitute a mitochondrion transit peptide; it reads MYYKFSSFTQKLAGAWASEAYTPQGLKPVSTEAPPIIFATPTKLTSSVTAYDYS. Lys68 is modified (N6-acetyllysine). A helical membrane pass occupies residues 79 to 104; sequence PDQMLYRTTMALTLGGTIYCLIALYM.

Belongs to the cytochrome c oxidase VIIa family.

It localises to the mitochondrion inner membrane. Functionally, non-functional protein. In contrast to the protein found in other strains (AC Q99KD6), cannot induce the assembly of mitochondrial respiratory supercomplexes. The sequence is that of Cytochrome c oxidase subunit 7A2-like, mitochondrial from Mus musculus (Mouse).